The following is a 127-amino-acid chain: Small ribosomal subunit protein uS11 (127 aa).

Belongs to the universal ribosomal protein uS11 family. In terms of assembly, part of the 30S ribosomal subunit. Interacts with proteins S7 and S18. Binds to IF-3.

In terms of biological role, located on the platform of the 30S subunit, it bridges several disparate RNA helices of the 16S rRNA. Forms part of the Shine-Dalgarno cleft in the 70S ribosome. This Rickettsia rickettsii (strain Iowa) protein is Small ribosomal subunit protein uS11.